The following is a 101-amino-acid chain: MMLEHILVLSAYLFSIGIYGLITSRNMVRALMCLELILNAVNINFVTFSDFFDSRQLKGNIFSIFVIAIAAAEAAIGSAIVSSIYRNRKSTRINQSTLLNK.

3 helical membrane passes run 2-22 (MLEHILVLSAYLFSIGIYGLI), 32-52 (MCLELILNAVNINFVTFSDFF), and 61-81 (IFSIFVIAIAAAEAAIGSAIV).

It belongs to the complex I subunit 4L family. NDH is composed of at least 16 different subunits, 5 of which are encoded in the nucleus.

It localises to the plastid. The protein resides in the chloroplast thylakoid membrane. The enzyme catalyses a plastoquinone + NADH + (n+1) H(+)(in) = a plastoquinol + NAD(+) + n H(+)(out). It carries out the reaction a plastoquinone + NADPH + (n+1) H(+)(in) = a plastoquinol + NADP(+) + n H(+)(out). NDH shuttles electrons from NAD(P)H:plastoquinone, via FMN and iron-sulfur (Fe-S) centers, to quinones in the photosynthetic chain and possibly in a chloroplast respiratory chain. The immediate electron acceptor for the enzyme in this species is believed to be plastoquinone. Couples the redox reaction to proton translocation, and thus conserves the redox energy in a proton gradient. The sequence is that of NAD(P)H-quinone oxidoreductase subunit 4L, chloroplastic from Gossypium hirsutum (Upland cotton).